Consider the following 145-residue polypeptide: UPF0735 ACT domain-containing protein CPE1414 (145 aa).

Positions Ile-69–Met-144 constitute an ACT domain.

It belongs to the UPF0735 family.

This is UPF0735 ACT domain-containing protein CPE1414 from Clostridium perfringens (strain 13 / Type A).